The primary structure comprises 512 residues: Photosystem II CP47 reaction center protein (512 aa).

6 helical membrane passes run 21–36 (AVHL…WAGS), 101–115 (IVLS…IWHW), 140–156 (GIHL…FGAF), 203–218 (IAAG…FHLS), 237–252 (VLSS…AFVV), and 457–472 (TFAL…HGAR).

The protein belongs to the PsbB/PsbC family. PsbB subfamily. In terms of assembly, PSII is composed of 1 copy each of membrane proteins PsbA, PsbB, PsbC, PsbD, PsbE, PsbF, PsbH, PsbI, PsbJ, PsbK, PsbL, PsbM, PsbT, PsbX, PsbY, PsbZ, Psb30/Ycf12, at least 3 peripheral proteins of the oxygen-evolving complex and a large number of cofactors. It forms dimeric complexes. It depends on Binds multiple chlorophylls. PSII binds additional chlorophylls, carotenoids and specific lipids. as a cofactor.

Its subcellular location is the plastid. It localises to the chloroplast thylakoid membrane. One of the components of the core complex of photosystem II (PSII). It binds chlorophyll and helps catalyze the primary light-induced photochemical processes of PSII. PSII is a light-driven water:plastoquinone oxidoreductase, using light energy to abstract electrons from H(2)O, generating O(2) and a proton gradient subsequently used for ATP formation. This is Photosystem II CP47 reaction center protein from Physcomitrium patens (Spreading-leaved earth moss).